A 1204-amino-acid polypeptide reads, in one-letter code: ATP-dependent helicase/nuclease subunit A (1204 aa).

A UvrD-like helicase ATP-binding domain is found at 2-472 (PQFTKEQEKA…ILLSDNFRST (471 aa)). 23 to 30 (ASAGSGKT) contributes to the ATP binding site. The region spanning 500–783 (GQLIFGAKYY…RLMTIHGSKG (284 aa)) is the UvrD-like helicase C-terminal domain.

The protein belongs to the helicase family. AddA subfamily. Heterodimer of AddA and AddB/RexB. Mg(2+) is required as a cofactor.

It catalyses the reaction Couples ATP hydrolysis with the unwinding of duplex DNA by translocating in the 3'-5' direction.. The enzyme catalyses ATP + H2O = ADP + phosphate + H(+). In terms of biological role, the heterodimer acts as both an ATP-dependent DNA helicase and an ATP-dependent, dual-direction single-stranded exonuclease. Recognizes the chi site generating a DNA molecule suitable for the initiation of homologous recombination. The AddA nuclease domain is required for chi fragment generation; this subunit has the helicase and 3' -&gt; 5' nuclease activities. The polypeptide is ATP-dependent helicase/nuclease subunit A (Lactobacillus helveticus (strain DPC 4571)).